Reading from the N-terminus, the 501-residue chain is Cytochrome P450 monooxygenase janQ (501 aa).

A helical membrane pass occupies residues 1 to 16; sequence MVLGLLAFIWLMRAWR. Asn-132 carries an N-linked (GlcNAc...) asparagine glycan. Cys-439 is a heme binding site.

It belongs to the cytochrome P450 family. The cofactor is heme.

The protein localises to the membrane. The protein operates within secondary metabolite biosynthesis. In terms of biological role, cytochrome P450 monooxygenase; part of the gene cluster that mediates the biosynthesis of the indole diterpenes janthitremanes such as shearinine K or shearinine A. The geranylgeranyl diphosphate (GGPP) synthase janG catalyzes the first step in janthitremane biosynthesis via conversion of farnesyl pyrophosphate and isopentyl pyrophosphate into geranylgeranyl pyrophosphate (GGPP). Condensation of indole-3-glycerol phosphate with GGPP by the prenyl transferase janC then forms 3-geranylgeranylindole (3-GGI). Epoxidation by the FAD-dependent monooxygenase janM leads to a epoxidized-GGI that is substrate of the terpene cyclase janB for cyclization to yield paspaline. Paspaline is subsequently converted to 13-desoxypaspaline by the cytochrome P450 monooxygenase janP, via beta-PC-M6 in a series of alpha-face oxidations. The cytochrome P450 monooxygenase janQ is proposed to carry out sequential beta-face oxidation steps at C-7 and C-13 of 13-desoxypaspaline to form paspalicine and paspalinine respectively. The indole diterpene prenyltransferase janD may then convert paspalinine into shearinine K which is substrate of janO and/or additional enzymes for oxidation and cyclization to generate shearinine A. This chain is Cytochrome P450 monooxygenase janQ, found in Penicillium janthinellum (Penicillium vitale).